The chain runs to 210 residues: NAD(P)H-quinone oxidoreductase subunit I (210 aa).

4Fe-4S ferredoxin-type domains lie at 54–83 (GRIH…VDWV) and 94–123 (YSYS…VTED). The [4Fe-4S] cluster site is built by C63, C66, C69, C73, C103, C106, C109, and C113.

Belongs to the complex I 23 kDa subunit family. In terms of assembly, NDH-1 is composed of at least 11 different subunits. It depends on [4Fe-4S] cluster as a cofactor.

The protein resides in the cellular thylakoid membrane. The enzyme catalyses a plastoquinone + NADH + (n+1) H(+)(in) = a plastoquinol + NAD(+) + n H(+)(out). It catalyses the reaction a plastoquinone + NADPH + (n+1) H(+)(in) = a plastoquinol + NADP(+) + n H(+)(out). Functionally, NDH-1 shuttles electrons from an unknown electron donor, via FMN and iron-sulfur (Fe-S) centers, to quinones in the respiratory and/or the photosynthetic chain. The immediate electron acceptor for the enzyme in this species is believed to be plastoquinone. Couples the redox reaction to proton translocation, and thus conserves the redox energy in a proton gradient. In Synechococcus sp. (strain JA-3-3Ab) (Cyanobacteria bacterium Yellowstone A-Prime), this protein is NAD(P)H-quinone oxidoreductase subunit I.